The primary structure comprises 316 residues: Beta-ketoacyl-[acyl-carrier-protein] synthase III (316 aa).

Residues C112 and H243 contribute to the active site. Positions 244–248 (QANIR) are ACP-binding. Residue N273 is part of the active site.

Belongs to the thiolase-like superfamily. FabH family. As to quaternary structure, homodimer.

Its subcellular location is the cytoplasm. The enzyme catalyses malonyl-[ACP] + acetyl-CoA + H(+) = 3-oxobutanoyl-[ACP] + CO2 + CoA. The protein operates within lipid metabolism; fatty acid biosynthesis. In terms of biological role, catalyzes the condensation reaction of fatty acid synthesis by the addition to an acyl acceptor of two carbons from malonyl-ACP. Catalyzes the first condensation reaction which initiates fatty acid synthesis and may therefore play a role in governing the total rate of fatty acid production. Possesses both acetoacetyl-ACP synthase and acetyl transacylase activities. Its substrate specificity determines the biosynthesis of branched-chain and/or straight-chain of fatty acids. The sequence is that of Beta-ketoacyl-[acyl-carrier-protein] synthase III from Actinobacillus pleuropneumoniae serotype 5b (strain L20).